The following is a 493-amino-acid chain: Lysine--tRNA ligase (493 aa).

The Mg(2+) site is built by Glu404 and Glu411.

This sequence belongs to the class-II aminoacyl-tRNA synthetase family. In terms of assembly, homodimer. Requires Mg(2+) as cofactor.

The protein resides in the cytoplasm. It carries out the reaction tRNA(Lys) + L-lysine + ATP = L-lysyl-tRNA(Lys) + AMP + diphosphate. This chain is Lysine--tRNA ligase, found in Oceanobacillus iheyensis (strain DSM 14371 / CIP 107618 / JCM 11309 / KCTC 3954 / HTE831).